A 141-amino-acid chain; its full sequence is Large ribosomal subunit protein uL16 (141 aa).

Positions 1-23 (MLMPKRTKYRKQMKGRNRGKAHR) are disordered.

The protein belongs to the universal ribosomal protein uL16 family. In terms of assembly, part of the 50S ribosomal subunit.

Functionally, binds 23S rRNA and is also seen to make contacts with the A and possibly P site tRNAs. This Helicobacter acinonychis (strain Sheeba) protein is Large ribosomal subunit protein uL16.